The sequence spans 337 residues: Ribosomal RNA small subunit methyltransferase H (337 aa).

Residues 33-35 (AGH), Asp-53, Asp-101, and Gln-108 each bind S-adenosyl-L-methionine.

The protein belongs to the methyltransferase superfamily. RsmH family.

Its subcellular location is the cytoplasm. It carries out the reaction cytidine(1402) in 16S rRNA + S-adenosyl-L-methionine = N(4)-methylcytidine(1402) in 16S rRNA + S-adenosyl-L-homocysteine + H(+). Its function is as follows. Specifically methylates the N4 position of cytidine in position 1402 (C1402) of 16S rRNA. This chain is Ribosomal RNA small subunit methyltransferase H, found in Herpetosiphon aurantiacus (strain ATCC 23779 / DSM 785 / 114-95).